The chain runs to 102 residues: Synaptobrevin-like protein 5 (102 aa).

The v-SNARE coiled-coil homology domain occupies 17–77; sequence KIMRTRRELD…VKIKREMSWK (61 aa).

This Caenorhabditis elegans protein is Synaptobrevin-like protein 5 (snb-5).